Consider the following 149-residue polypeptide: FAD synthase (149 aa).

ATP-binding positions include 15–16 (VF), 20–23 (HVGH), and Asp-101.

It belongs to the archaeal FAD synthase family. Homodimer. A divalent metal cation is required as a cofactor.

The catalysed reaction is FMN + ATP + H(+) = FAD + diphosphate. Its pathway is cofactor biosynthesis; FAD biosynthesis; FAD from FMN: step 1/1. Its function is as follows. Catalyzes the transfer of the AMP portion of ATP to flavin mononucleotide (FMN) to produce flavin adenine dinucleotide (FAD) coenzyme. This Thermococcus kodakarensis (strain ATCC BAA-918 / JCM 12380 / KOD1) (Pyrococcus kodakaraensis (strain KOD1)) protein is FAD synthase.